Reading from the N-terminus, the 336-residue chain is 4-hydroxythreonine-4-phosphate dehydrogenase (336 aa).

Histidine 135 and threonine 136 together coordinate substrate. A divalent metal cation contacts are provided by histidine 165, histidine 210, and histidine 265. Lysine 273, asparagine 282, and arginine 291 together coordinate substrate.

Belongs to the PdxA family. As to quaternary structure, homodimer. Zn(2+) serves as cofactor. Requires Mg(2+) as cofactor. Co(2+) is required as a cofactor.

It is found in the cytoplasm. The enzyme catalyses 4-(phosphooxy)-L-threonine + NAD(+) = 3-amino-2-oxopropyl phosphate + CO2 + NADH. It functions in the pathway cofactor biosynthesis; pyridoxine 5'-phosphate biosynthesis; pyridoxine 5'-phosphate from D-erythrose 4-phosphate: step 4/5. Catalyzes the NAD(P)-dependent oxidation of 4-(phosphooxy)-L-threonine (HTP) into 2-amino-3-oxo-4-(phosphooxy)butyric acid which spontaneously decarboxylates to form 3-amino-2-oxopropyl phosphate (AHAP). This Marinobacter nauticus (strain ATCC 700491 / DSM 11845 / VT8) (Marinobacter aquaeolei) protein is 4-hydroxythreonine-4-phosphate dehydrogenase.